The chain runs to 501 residues: Glutamyl-tRNA(Gln) amidotransferase subunit A (501 aa).

Catalysis depends on charge relay system residues Lys-80 and Ser-155. The active-site Acyl-ester intermediate is Ser-179.

This sequence belongs to the amidase family. GatA subfamily. Heterotrimer of A, B and C subunits.

It carries out the reaction L-glutamyl-tRNA(Gln) + L-glutamine + ATP + H2O = L-glutaminyl-tRNA(Gln) + L-glutamate + ADP + phosphate + H(+). Allows the formation of correctly charged Gln-tRNA(Gln) through the transamidation of misacylated Glu-tRNA(Gln) in organisms which lack glutaminyl-tRNA synthetase. The reaction takes place in the presence of glutamine and ATP through an activated gamma-phospho-Glu-tRNA(Gln). The polypeptide is Glutamyl-tRNA(Gln) amidotransferase subunit A (Cupriavidus necator (strain ATCC 17699 / DSM 428 / KCTC 22496 / NCIMB 10442 / H16 / Stanier 337) (Ralstonia eutropha)).